The primary structure comprises 509 residues: ATP synthase subunit alpha (509 aa).

Residue 169–176 participates in ATP binding; it reads GDRQTGKT.

Belongs to the ATPase alpha/beta chains family. F-type ATPases have 2 components, CF(1) - the catalytic core - and CF(0) - the membrane proton channel. CF(1) has five subunits: alpha(3), beta(3), gamma(1), delta(1), epsilon(1). CF(0) has three main subunits: a(1), b(2) and c(9-12). The alpha and beta chains form an alternating ring which encloses part of the gamma chain. CF(1) is attached to CF(0) by a central stalk formed by the gamma and epsilon chains, while a peripheral stalk is formed by the delta and b chains.

Its subcellular location is the cell inner membrane. It carries out the reaction ATP + H2O + 4 H(+)(in) = ADP + phosphate + 5 H(+)(out). In terms of biological role, produces ATP from ADP in the presence of a proton gradient across the membrane. The alpha chain is a regulatory subunit. The polypeptide is ATP synthase subunit alpha (Rhizobium meliloti (strain 1021) (Ensifer meliloti)).